Here is a 182-residue protein sequence, read N- to C-terminus: Adenine phosphoribosyltransferase (182 aa).

This sequence belongs to the purine/pyrimidine phosphoribosyltransferase family. Homodimer.

The protein localises to the cytoplasm. It carries out the reaction AMP + diphosphate = 5-phospho-alpha-D-ribose 1-diphosphate + adenine. It participates in purine metabolism; AMP biosynthesis via salvage pathway; AMP from adenine: step 1/1. In terms of biological role, catalyzes a salvage reaction resulting in the formation of AMP, that is energically less costly than de novo synthesis. This chain is Adenine phosphoribosyltransferase, found in Stutzerimonas stutzeri (Pseudomonas stutzeri).